We begin with the raw amino-acid sequence, 258 residues long: Apolipoprotein A-I (258 aa).

The N-terminal stretch at 1–18 is a signal peptide; sequence MKFLVLALTILLAAGTQA. Positions 32 to 63 are 3 X approximate tandem repeats; the sequence is VKAALNMYIAQVKLTAQRSIDLLDDTEYKEYK. 2 tandem repeats follow at residues 64–85 and 86–106. Residues 64-258 form a 10 X approximate tandem repeats region; sequence MQLSQSLDNL…WLSTRPSARP (195 aa). A 3; half-length repeat occupies 107 to 117; the sequence is KDVEDVRTQLE. A run of 7 repeats spans residues 118–139, 140–161, 162–183, 184–205, 206–227, 228–238, and 239–258. The tract at residues 233–258 is disordered; the sequence is FKARWAPPPRRPSKSSWLSTRPSARP. Residues 246–258 are compositionally biased toward polar residues; the sequence is KSSWLSTRPSARP.

Belongs to the apolipoprotein A1/A4/E family. Major protein of plasma HDL, also found in chylomicrons. Expressed in liver, intestine and muscle.

It localises to the secreted. Functionally, participates in the reverse transport of cholesterol from tissues to the liver for excretion by promoting cholesterol efflux from tissues and by acting as a cofactor for the lecithin cholesterol acyltransferase (LCAT). The protein is Apolipoprotein A-I (apoa1) of Salmo salar (Atlantic salmon).